We begin with the raw amino-acid sequence, 455 residues long: Bifunctional protein GlmU (455 aa).

Positions 1–226 (MGLSVVILAA…EFEILGVNDR (226 aa)) are pyrophosphorylase. UDP-N-acetyl-alpha-D-glucosamine contacts are provided by residues 8 to 11 (LAAG), K22, Q73, 78 to 79 (GT), 99 to 101 (YGD), G136, E151, N166, and N224. D101 contacts Mg(2+). Residue N224 coordinates Mg(2+). Residues 227–247 (TQLASLERVWQRNVAEKIMAK) are linker. Residues 248–455 (GVSIADPNRF…WQRSVKKTDK (208 aa)) are N-acetyltransferase. Residues R330 and K348 each contribute to the UDP-N-acetyl-alpha-D-glucosamine site. Residue H360 is the Proton acceptor of the active site. 2 residues coordinate UDP-N-acetyl-alpha-D-glucosamine: Y363 and N374. Residues A377, 383–384 (NY), S402, A420, and R437 each bind acetyl-CoA.

This sequence in the N-terminal section; belongs to the N-acetylglucosamine-1-phosphate uridyltransferase family. In the C-terminal section; belongs to the transferase hexapeptide repeat family. Homotrimer. Mg(2+) serves as cofactor.

It localises to the cytoplasm. It carries out the reaction alpha-D-glucosamine 1-phosphate + acetyl-CoA = N-acetyl-alpha-D-glucosamine 1-phosphate + CoA + H(+). The enzyme catalyses N-acetyl-alpha-D-glucosamine 1-phosphate + UTP + H(+) = UDP-N-acetyl-alpha-D-glucosamine + diphosphate. It participates in nucleotide-sugar biosynthesis; UDP-N-acetyl-alpha-D-glucosamine biosynthesis; N-acetyl-alpha-D-glucosamine 1-phosphate from alpha-D-glucosamine 6-phosphate (route II): step 2/2. The protein operates within nucleotide-sugar biosynthesis; UDP-N-acetyl-alpha-D-glucosamine biosynthesis; UDP-N-acetyl-alpha-D-glucosamine from N-acetyl-alpha-D-glucosamine 1-phosphate: step 1/1. Its pathway is bacterial outer membrane biogenesis; LPS lipid A biosynthesis. Its function is as follows. Catalyzes the last two sequential reactions in the de novo biosynthetic pathway for UDP-N-acetylglucosamine (UDP-GlcNAc). The C-terminal domain catalyzes the transfer of acetyl group from acetyl coenzyme A to glucosamine-1-phosphate (GlcN-1-P) to produce N-acetylglucosamine-1-phosphate (GlcNAc-1-P), which is converted into UDP-GlcNAc by the transfer of uridine 5-monophosphate (from uridine 5-triphosphate), a reaction catalyzed by the N-terminal domain. In Francisella tularensis subsp. tularensis (strain SCHU S4 / Schu 4), this protein is Bifunctional protein GlmU.